A 767-amino-acid polypeptide reads, in one-letter code: Transducin-like enhancer protein 2 (767 aa).

The q domain stretch occupies residues 1–152 (MYPQGRHPTP…SLLGQQNQLQ (152 aa)). Residues 153–215 (PLSHAPPVPL…SRVDRAASRS (63 aa)) are GP domain. Over residues 198 to 212 (RVGVDAEGSRVDRAA) the composition is skewed to basic and acidic residues. Disordered stretches follow at residues 198–257 (RVGV…EEDK), 264–283 (VDED…CGKA), and 296–346 (SPAS…SSAS). Positions 216 to 279 (SSPSPPESLV…SEPPSPVTTP (64 aa)) are ccN domain. The Nuclear localization signal motif lies at 238–242 (KQQRA). A Phosphoserine; by CK2 modification is found at S253. Residue S274 is modified to Phosphoserine; by CDK1. Phosphothreonine; by CDK1 is present on T278. The interval 280 to 447 (CGKAPLCIPA…VAKPAYSFHV (168 aa)) is SP domain. Residues 296–309 (SPASLASSLGSPLP) show a composition bias toward low complexity. A Phosphoserine modification is found at S306. The segment covering 323–346 (TPASRSCGTSPPQDSSTPGPSSAS) has biased composition (polar residues). WD repeat units lie at residues 479–517 (AHGE…SKTP), 525–564 (NRDN…PRIK), 569–608 (SSAP…MVRQ), 611–650 (GHTD…QLQQ), 693–732 (LHES…SIFQ), and 734–766 (KESS…YEVV).

This sequence belongs to the WD repeat Groucho/TLE family. Homooligomer and heterooligomer with other family members. Binds LEF1, TCF7, TCF7L1, TCF7L2, UTY, HES1 and HES5. In terms of processing, ubiquitinated by XIAP/BIRC4. Expressed in bone marrow-derived macrophages.

It localises to the nucleus. In terms of biological role, transcriptional corepressor that binds to a number of transcription factors. Inhibits the transcriptional activation mediated by CTNNB1 and TCF family members in Wnt signaling. The effects of full-length TLE family members may be modulated by association with dominant-negative AES. This Mus musculus (Mouse) protein is Transducin-like enhancer protein 2 (Tle2).